The following is a 158-amino-acid chain: Transcription elongation factor GreA (158 aa).

This sequence belongs to the GreA/GreB family.

Its function is as follows. Necessary for efficient RNA polymerase transcription elongation past template-encoded arresting sites. The arresting sites in DNA have the property of trapping a certain fraction of elongating RNA polymerases that pass through, resulting in locked ternary complexes. Cleavage of the nascent transcript by cleavage factors such as GreA or GreB allows the resumption of elongation from the new 3'terminus. GreA releases sequences of 2 to 3 nucleotides. This is Transcription elongation factor GreA from Rhizobium johnstonii (strain DSM 114642 / LMG 32736 / 3841) (Rhizobium leguminosarum bv. viciae).